Here is a 214-residue protein sequence, read N- to C-terminus: Transcriptional regulatory protein ComA (214 aa).

The 119-residue stretch at 3 to 121 (KILVIDDHPA…KITQYIYHVL (119 aa)) folds into the Response regulatory domain. D55 is modified (4-aspartylphosphate). Residues 147–212 (SQKEQDVLTP…EAVLIAKSDG (66 aa)) enclose the HTH luxR-type domain. The H-T-H motif DNA-binding region spans 171-190 (NQEIADALHLSKRSIEYSLT).

Post-translationally, phosphorylated by ComP.

The protein localises to the cytoplasm. Its function is as follows. Response regulator in the two-component regulatory system ComP/ComA involved in a major quorum response pathway that regulates the development of genetic competence. Regulates directly the expression of over 20 genes, including genes of the srfA operon, degQ, rapA, rapC, rapE, rapF, etc. Regulates indirectly, through the regulation of comK transcription, the expression of late competence genes. The chain is Transcriptional regulatory protein ComA (comA) from Bacillus subtilis (strain 168).